A 1021-amino-acid polypeptide reads, in one-letter code: Immunoglobulin superfamily member 2 (1021 aa).

An N-terminal signal peptide occupies residues 1–20 (MAGISYVASFFLLLTKLSIG). Residues 21–954 (QREVTVQKGP…LPSRICSSAP (934 aa)) lie on the Extracellular side of the membrane. 7 Ig-like C2-type domains span residues 22–139 (REVT…AKTN), 144–265 (PDTL…WMFI), 279–389 (PAVK…RTGS), 408–525 (PAAR…RDLS), 541–651 (LQVS…NSLY), 656–794 (PRAS…WHKL), and 808–925 (PTGS…KWIN). 2 disulfides stabilise this stretch: C43–C121 and C168–C249. N-linked (GlcNAc...) asparagine glycosylation is present at N44. The EWI motif motif lies at 253–255 (EWI). Cystine bridges form between C304-C377, C434-C511, C562-C640, C697-C778, and C834-C909. N-linked (GlcNAc...) asparagine glycosylation is present at N322. The helical transmembrane segment at 955 to 975 (LLYFLFICPFVLLLLLLISLL) threads the bilayer. The Cytoplasmic portion of the chain corresponds to 976–1021 (CLYWKARKLSTLRSNTRKEKALWVDLKEAGGVTTNRREDEEEDEGN).

Post-translationally, N-glycosylated. In terms of tissue distribution, expressed in lung, thymus and small intestine. Detected in cutaneous dendritic cells, activated T-cells, monocytes and granulocytes as well as with epithelial cells with dendritic morphology. Expressed in some leukemic cells, the CD4(+) CD56(+) blastic tumor cells, as well as in Langerhans cells from LCH (Langerhans cell histiocytosis) patients.

It localises to the membrane. In terms of biological role, plays a role as inhibitor of T-cells proliferation induced by CD3. Inhibits expression of IL2RA on activated T-cells and secretion of IL2. Inhibits tyrosine kinases that are required for IL2 production and cellular proliferation. Inhibits phospholipase C-gamma-1/PLCG1 phosphorylation and subsequent CD3-induced changes in intracellular free calcium. Prevents nuclear translocation of nuclear factor of activated T-cell to the nucleus. Plays a role in the inhibition of T-cell proliferation via IL10 secretion by cutaneous dendritic cells. May be a marker of CD4(+) CD56(+) leukemic tumor cells. This is Immunoglobulin superfamily member 2 (CD101) from Homo sapiens (Human).